The chain runs to 417 residues: Probable metalloprotease arx1 (417 aa).

It belongs to the peptidase M24 family. Component of the nucleoplasmic and cytoplasmic pre-60S ribosomal particles.

The protein localises to the cytoplasm. It localises to the nucleus. Functionally, probable metalloprotease involved in proper assembly of pre-ribosomal particles during the biogenesis of the 60S ribosomal subunit. Accompanies the pre-60S particles to the cytoplasm. In Schizosaccharomyces pombe (strain 972 / ATCC 24843) (Fission yeast), this protein is Probable metalloprotease arx1 (arx1).